The following is a 253-amino-acid chain: Phosphoribosylaminoimidazole-succinocarboxamide synthase (253 aa).

This sequence belongs to the SAICAR synthetase family.

It carries out the reaction 5-amino-1-(5-phospho-D-ribosyl)imidazole-4-carboxylate + L-aspartate + ATP = (2S)-2-[5-amino-1-(5-phospho-beta-D-ribosyl)imidazole-4-carboxamido]succinate + ADP + phosphate + 2 H(+). Its pathway is purine metabolism; IMP biosynthesis via de novo pathway; 5-amino-1-(5-phospho-D-ribosyl)imidazole-4-carboxamide from 5-amino-1-(5-phospho-D-ribosyl)imidazole-4-carboxylate: step 1/2. This is Phosphoribosylaminoimidazole-succinocarboxamide synthase from Parvibaculum lavamentivorans (strain DS-1 / DSM 13023 / NCIMB 13966).